Reading from the N-terminus, the 303-residue chain is Probable cell division protein WhiA (303 aa).

The H-T-H motif DNA-binding region spans 272-303 (SIQQIADSLAVPLTKSGVNHRLRKINKIAEDL).

This sequence belongs to the WhiA family.

Involved in cell division and chromosome segregation. In Streptococcus mutans serotype c (strain ATCC 700610 / UA159), this protein is Probable cell division protein WhiA.